Here is a 1237-residue protein sequence, read N- to C-terminus: Structural protein VP1 (1237 aa).

Positions 1006–1222 constitute a PPPDE domain; that stretch reads EPLRTLLFKL…ENDVRIAMIH (217 aa). Residues His-1040 and Cys-1192 contribute to the active site.

The protein localises to the virion. The sequence is that of Structural protein VP1 from Rice ragged stunt virus (isolate Thailand) (RRSV).